Consider the following 247-residue polypeptide: GTP cyclohydrolase 1 type 2 homolog (247 aa).

Residues H63, H64, D101, H215, and E219 each coordinate a divalent metal cation.

The protein belongs to the GTP cyclohydrolase I type 2/NIF3 family. In terms of assembly, toroid-shaped homohexamer. In the hexamer, 3 dimers assemble to form a ring-like structure surrounding a central hole.

Its function is as follows. Provides significant protection from radiation damage and may be involved in the degradation of radiation-damaged nucleotides. The chain is GTP cyclohydrolase 1 type 2 homolog (ybgI) from Salmonella typhi.